The following is a 229-amino-acid chain: MLKTVLRLPVCAALLALAAGCAMIPPEPVVICPLTAPPPSPPQPSARPNGSIYQPSAYGNYPLFEDRRPRNVGDIVTIVLEEKTNAAKGVATNTSRDGSATLGVAAAPRFMDGIINDKLDTDISGGNTANGTGKSSANNTFTGTITTTVIGVLPNGNLQIAGEKQIAINRGSEYVRFSGVVDPRSITGSNTVSSTRVADARIEYRSKGVMDEVQTMGWLQRFFLIASPF.

The first 20 residues, 1–20, serve as a signal peptide directing secretion; the sequence is MLKTVLRLPVCAALLALAAG. Cysteine 21 carries the N-palmitoyl cysteine lipid modification. Cysteine 21 is lipidated: S-diacylglycerol cysteine.

This sequence belongs to the FlgH family. The basal body constitutes a major portion of the flagellar organelle and consists of four rings (L,P,S, and M) mounted on a central rod.

Its subcellular location is the cell outer membrane. It localises to the bacterial flagellum basal body. Functionally, assembles around the rod to form the L-ring and probably protects the motor/basal body from shearing forces during rotation. In Bordetella pertussis (strain Tohama I / ATCC BAA-589 / NCTC 13251), this protein is Flagellar L-ring protein.